Consider the following 21-residue polypeptide: DKNKKPIRVGGRRPPGFTPFR.

The span at 1–11 (DKNKKPIRVGG) shows a compositional bias: basic residues. A disordered region spans residues 1–21 (DKNKKPIRVGGRRPPGFTPFR).

The protein belongs to the bradykinin-related peptide family. As to expression, expressed by the venom gland.

The protein localises to the secreted. Causes constriction of the isolated rat ileum muscles (is 13-fold less potent than bradykinin (BK)), as well as degranulation of mast cells (is 7-fold more potent than BK). In vivo, causes algesic effects. Muscle constriction and algesic effects are partially mediated by bradykinin receptors B2 (BDKRB2). The chain is Protopolybiakinin-1 from Protopolybia exigua (Neotropical social wasp).